Here is a 758-residue protein sequence, read N- to C-terminus: Spastin (758 aa).

Residues 1–103 (MVRTKNQSSS…SPRSGHHHSY (103 aa)) form a disordered region. At 1–121 (MVRTKNQSSS…KQNLYVVSFP (121 aa)) the chain is on the cytoplasmic side. The tract at residues 1–210 (MVRTKNQSSS…RPIQPLEMAA (210 aa)) is required for localization to punctate cytoplasmic foci. 4 stretches are compositionally biased toward low complexity: residues 8–28 (SSSS…SSGA), 43–58 (RSSS…AGGS), 66–76 (SSNRRSPGSSP), and 85–95 (TDDLTPTTCSP). The helical intramembrane region spans 122–142 (IIFLFNVLRSLIYQLFCIFRY). Residues 143–758 (LYGASTKVIY…WSQDYGDITI (616 aa)) are Cytoplasmic-facing. Polar residues-rich tracts occupy residues 169–180 (SKEQQQSLNHPS) and 189–198 (QEQQLSNQPQ). The disordered stretch occupies residues 169-202 (SKEQQQSLNHPSELNREGDGQEQQLSNQPQRFRP). The tract at residues 208-758 (MAANRPGGGY…WSQDYGDITI (551 aa)) is sufficient for interaction with microtubules and microtubule severing. The region spanning 233-308 (HRRAFEYISK…SMARDRLHFL (76 aa)) is the MIT domain. Residues 323–339 (KEKQKEEARSKPQKSRE) are compositionally biased toward basic and acidic residues. The disordered stretch occupies residues 323–454 (KEKQKEEARS…GPSGSGASTP (132 aa)). Composition is skewed to polar residues over residues 390–406 (NKSQ…TSVG) and 425–454 (QFSS…ASTP). The tract at residues 443-455 (NNGPSGSGASTPV) is required for interaction with microtubules. Residue 523-530 (GPPGNGKT) participates in ATP binding.

This sequence belongs to the AAA ATPase family. Spastin subfamily. Homohexamer. The homohexamer is stabilized by ATP-binding. The homohexamer may adopt a ring conformation through which microtubules pass prior to being severed. Interacts with microtubules. Interacts with atl; may be involved in microtubule dynamics.

The protein localises to the membrane. Its subcellular location is the cytoplasm. It localises to the cytoskeleton. It is found in the microtubule organizing center. The protein resides in the centrosome. The protein localises to the chromosome. Its subcellular location is the lipid droplet. The catalysed reaction is n ATP + n H2O + a microtubule = n ADP + n phosphate + (n+1) alpha/beta tubulin heterodimers.. Functionally, ATP-dependent microtubule severing protein. Stimulates microtubule minus-end depolymerization and poleward microtubule flux in the mitotic spindle. Regulates microtubule stability in the neuromuscular junction synapse. Involved in lipid metabolism by regulating the size and distribution of lipid droplets. Involved in axon regeneration by regulating microtubule severing. This is Spastin from Drosophila simulans (Fruit fly).